The following is a 671-amino-acid chain: MSEFQLVTRFEPAGDQPEAIRQLVEGIDAGLAHQTLLGVTGSGKTFSIANVISQVKRPTLVLAPNKTLAAQLYGEFKAFFPNNAVEYFVSYYDYYQPEAYVPSSDTFIEKDASINDHIEQMRLSATKALLERKDAIIVTTVSCIYGLGSPETYLRMVMHIDRGDKLDQRALLRRLADLQYTRNDMDFARATFRVRGDVIDIYPAESDLEAIRVELFDDEVESLSAFDPLTGEVIRKLPRFTFYPKSHYVTPRETLIEAMEGIKVELQERLEYLRTQNKLVEAQRLEQRTRFDLEMMLELGYCNGIENYSRYLSGRPSGAPPPTLFDYLPADALLVIDESHVSVPQVGAMYKGDRSRKETLVEYGFRLPSALDNRPMRFDEWEAISPQTIFVSATPGNYEAEHAGRVVEQVVRPTGLVDPQIEIRPALTQVDDLLSEIHKRTALEERVLVTTLTKRMSEDLTDYLSDHGVRVRYLHSDIDTVERVEIIRDLRLGTFDVLVGINLLREGLDMPEVSLVAILDADKEGFLRSDRSLIQTIGRAARNLNGRAILYADRITGSMERAIGETERRRDKQLAFNHEHGITPKGVFKDVADIMEGATVPGSRSKKRKGMAKAAEENARYENELRSPSEINKRIRQLEEKMYQLARDLEFEAAAQMRDEIGKLRERLLAV.

The Helicase ATP-binding domain maps to 25-412; sequence EGIDAGLAHQ…AGRVVEQVVR (388 aa). ATP is bound at residue 38-45; the sequence is GVTGSGKT. The Beta-hairpin motif lies at 91–114; that stretch reads YYDYYQPEAYVPSSDTFIEKDASI. The region spanning 429–595 is the Helicase C-terminal domain; that stretch reads QVDDLLSEIH…GVFKDVADIM (167 aa). A disordered region spans residues 600-624; the sequence is VPGSRSKKRKGMAKAAEENARYENE. Over residues 614–624 the composition is skewed to basic and acidic residues; sequence AAEENARYENE. Residues 632–667 enclose the UVR domain; sequence NKRIRQLEEKMYQLARDLEFEAAAQMRDEIGKLRER.

This sequence belongs to the UvrB family. As to quaternary structure, forms a heterotetramer with UvrA during the search for lesions. Interacts with UvrC in an incision complex.

It is found in the cytoplasm. Its function is as follows. The UvrABC repair system catalyzes the recognition and processing of DNA lesions. A damage recognition complex composed of 2 UvrA and 2 UvrB subunits scans DNA for abnormalities. Upon binding of the UvrA(2)B(2) complex to a putative damaged site, the DNA wraps around one UvrB monomer. DNA wrap is dependent on ATP binding by UvrB and probably causes local melting of the DNA helix, facilitating insertion of UvrB beta-hairpin between the DNA strands. Then UvrB probes one DNA strand for the presence of a lesion. If a lesion is found the UvrA subunits dissociate and the UvrB-DNA preincision complex is formed. This complex is subsequently bound by UvrC and the second UvrB is released. If no lesion is found, the DNA wraps around the other UvrB subunit that will check the other stand for damage. The sequence is that of UvrABC system protein B from Pseudomonas savastanoi pv. phaseolicola (strain 1448A / Race 6) (Pseudomonas syringae pv. phaseolicola (strain 1448A / Race 6)).